We begin with the raw amino-acid sequence, 525 residues long: GMP synthase [glutamine-hydrolyzing] (525 aa).

One can recognise a Glutamine amidotransferase type-1 domain in the interval Arg9–Leu207. The active-site Nucleophile is the Cys86. Residues His181 and Glu183 contribute to the active site. The region spanning Trp208–Arg400 is the GMPS ATP-PPase domain. Ser235–Ser241 is a binding site for ATP.

In terms of assembly, homodimer.

The catalysed reaction is XMP + L-glutamine + ATP + H2O = GMP + L-glutamate + AMP + diphosphate + 2 H(+). It participates in purine metabolism; GMP biosynthesis; GMP from XMP (L-Gln route): step 1/1. Its function is as follows. Catalyzes the synthesis of GMP from XMP. This is GMP synthase [glutamine-hydrolyzing] from Salmonella schwarzengrund (strain CVM19633).